Here is a 397-residue protein sequence, read N- to C-terminus: Phosphoglycerate kinase (397 aa).

Residues 21 to 23 (DFN), Arg-37, 60 to 63 (HLGR), Arg-119, and Arg-152 contribute to the substrate site. ATP contacts are provided by residues Lys-203, Gly-294, Glu-325, and 354–357 (GGDS).

It belongs to the phosphoglycerate kinase family. Monomer.

Its subcellular location is the cytoplasm. It catalyses the reaction (2R)-3-phosphoglycerate + ATP = (2R)-3-phospho-glyceroyl phosphate + ADP. It participates in carbohydrate degradation; glycolysis; pyruvate from D-glyceraldehyde 3-phosphate: step 2/5. The polypeptide is Phosphoglycerate kinase (Prosthecochloris aestuarii (strain DSM 271 / SK 413)).